The following is a 148-amino-acid chain: Early glycoprotein GP48 (148 aa).

Positions 1–21 (MMLRAWRLMVLLAAYCYYVFA) are cleaved as a signal peptide. N-linked (GlcNAc...) asparagine; by host glycans are attached at residues Asn-22, Asn-44, Asn-49, Asn-57, Asn-65, Asn-104, Asn-108, Asn-118, Asn-135, and Asn-144.

Belongs to the RL11 family. In terms of processing, N-glycosylated and possibly O-glycosylated.

It is found in the virion membrane. In Homo sapiens (Human), this protein is Early glycoprotein GP48 (UL4).